The primary structure comprises 66 residues: Large ribosomal subunit protein bL35 (66 aa).

The protein belongs to the bacterial ribosomal protein bL35 family.

This is Large ribosomal subunit protein bL35 from Borrelia garinii subsp. bavariensis (strain ATCC BAA-2496 / DSM 23469 / PBi) (Borreliella bavariensis).